Here is a 381-residue protein sequence, read N- to C-terminus: Putative glycosyltransferase EpsD (381 aa).

This sequence belongs to the glycosyltransferase group 1 family. Glycosyltransferase 4 subfamily.

May be involved in the production of the exopolysaccharide (EPS) component of the extracellular matrix during biofilm formation. EPS is responsible for the adhesion of chains of cells into bundles. Required for biofilm maintenance. The polypeptide is Putative glycosyltransferase EpsD (epsD) (Bacillus subtilis (strain 168)).